A 1328-amino-acid chain; its full sequence is Peroxidasin homolog pxn-2 (1328 aa).

An N-terminal signal peptide occupies residues 1–16 (MLLEFLLLIGISLSTA). The LRRNT domain occupies 17–45 (CPSECRCAGLDVHCEGKNLTAIPGHIPIA). N-linked (GlcNAc...) asparagine glycosylation is present at Asn-34. 6 LRR repeats span residues 42–66 (IPIA…NFQA), 67–90 (LPNL…LLDS), 92–114 (PGLK…STAP), 116–137 (ALVS…LVSH), 138–161 (SPYM…FFNS), and 164–191 (VPTL…QFAD). A glycan (N-linked (GlcNAc...) asparagine) is linked at Asn-77. A glycan (N-linked (GlcNAc...) asparagine) is linked at Asn-220. Residues 305-332 (KKMQASSSTEPPITTTTMEPMTTSTMDS) are disordered. The segment covering 310–332 (SSSTEPPITTTTMEPMTTSTMDS) has biased composition (low complexity). 2 consecutive Ig-like C2-type domains span residues 346–438 (PEID…FSVS) and 445–532 (PVII…ANLL). Cys-373 and Cys-422 form a disulfide bridge. N-linked (GlcNAc...) asparagine glycosylation is found at Asn-403 and Asn-455. A disulfide bond links Cys-466 and Cys-516. N-linked (GlcNAc...) asparagine glycosylation occurs at Asn-630. An intrachain disulfide couples Cys-660 to Cys-676. Residue Asp-754 coordinates heme b. The active-site Proton acceptor is His-755. Ca(2+) is bound at residue Asp-756. Cystine bridges form between Cys-775–Cys-785 and Cys-779–Cys-807. The N-linked (GlcNAc...) asparagine glycan is linked to Asn-776. Residues Thr-839, Tyr-841, Asp-843, and Ser-845 each contribute to the Ca(2+) site. An N-linked (GlcNAc...) asparagine glycan is attached at Asn-894. The heme b site is built by Glu-913 and His-1008. Residues 1085–1109 (ALDLAALNIQRGRDHGLPSWTEYRK) form an LRR 7 repeat. Cystine bridges form between Cys-1111–Cys-1168 and Cys-1209–Cys-1236. N-linked (GlcNAc...) asparagine glycans are attached at residues Asn-1112 and Asn-1128. The stretch at 1204-1225 (LSKIICTNGDDIDRIQRDIFVY) is one LRR 8 repeat. Asn-1228 carries an N-linked (GlcNAc...) asparagine glycan. The segment at 1266 to 1297 (IGGDEKAKRRKRRHHHSKKSCHDKGKRRKSGD) is disordered. The segment covering 1273 to 1295 (KRRKRRHHHSKKSCHDKGKRRKS) has biased composition (basic residues). N-linked (GlcNAc...) asparagine glycosylation is present at Asn-1300.

The protein belongs to the peroxidase family. XPO subfamily. Ca(2+) is required as a cofactor. Heme b serves as cofactor. As to expression, expressed in vulval muscles and in some neurons including PVQ. Expressed in the hypodermis and in coelomocytes.

It localises to the secreted. The protein localises to the extracellular space. It is found in the extracellular matrix. Its subcellular location is the basement membrane. It catalyses the reaction L-lysyl-[collagen] + L-methionyl-[collagen] + H2O2 = [collagen]-L-lysyl-N-S-L-methionyl-[collagen] + 2 H2O + H(+). The catalysed reaction is bromide + H2O2 = hypobromite + H2O. The enzyme catalyses L-lysyl-[collagen] + L-methionyl-[collagen] + hypobromite = [collagen]-L-lysyl-N-S-L-methionyl-[collagen] + bromide + H2O + H(+). It carries out the reaction L-tyrosyl-[protein] + bromide + H2O2 + H(+) = 3-bromo-L-tyrosyl-[protein] + 2 H2O. It catalyses the reaction hypobromite + L-tyrosyl-[protein] + H(+) = 3-bromo-L-tyrosyl-[protein] + H2O. Its function is as follows. Catalyzes the two-electron oxidation of bromide by hydrogen peroxide and generates hypobromite as a reactive intermediate which mediates the formation of sulfilimine cross-links between methionine and hydroxylysine residues within an uncross-linked collagen IV/COL4A1 NC1 hexamer. Required for embryonic morphogenesis playing a role in epidermal elongation at the twofold stage of embryonic development. Required post-embryonically for basement membrane integrity and muscle-epidermal attachments, and specifically in the function of basement membrane components such as the type IV collagens. May have a role in inhibiting axon regeneration. May functionally antagonize the peroxidasin pxn-1. This Caenorhabditis elegans protein is Peroxidasin homolog pxn-2.